We begin with the raw amino-acid sequence, 228 residues long: UPF0758 protein str1465 (228 aa).

Residues 103–225 enclose the MPN domain; the sequence is QIMSSQQVAR…YYSFREERED (123 aa). Zn(2+) is bound by residues His-174, His-176, and Asp-187. A JAMM motif motif is present at residues 174–187; sequence HNHPSGEAYPSRND.

This sequence belongs to the UPF0758 family.

The protein is UPF0758 protein str1465 of Streptococcus thermophilus (strain CNRZ 1066).